The chain runs to 311 residues: GTP cyclohydrolase MptA (311 aa).

The protein belongs to the GTP cyclohydrolase IV family. As to quaternary structure, homodimer. The cofactor is Fe(2+).

The catalysed reaction is GTP + H2O = 7,8-dihydroneopterin 2',3'-cyclic phosphate + formate + diphosphate + H(+). It functions in the pathway cofactor biosynthesis; 5,6,7,8-tetrahydromethanopterin biosynthesis. Converts GTP to 7,8-dihydro-D-neopterin 2',3'-cyclic phosphate, the first intermediate in the biosynthesis of coenzyme methanopterin. The sequence is that of GTP cyclohydrolase MptA from Halobacterium salinarum (strain ATCC 29341 / DSM 671 / R1).